The primary structure comprises 76 residues: MNKNRMKSLKEDYKHFAFTLLAVSTFLYIGAVLPDQGLTLGQKSTMFLADCVFLAGAFFCADRSLIYKKRLEEADE.

Helical transmembrane passes span 16 to 33 (FAFTLLAVSTFLYIGAVL) and 45 to 61 (TMFLADCVFLAGAFFCA).

It is found in the cell membrane. This is an uncharacterized protein from Bacillus subtilis (strain 168).